A 36-amino-acid polypeptide reads, in one-letter code: MTAAYLPSILVPLVGLVFPAIAMASLFLYIEEQQIS.

A helical transmembrane segment spans residues 9–29 (ILVPLVGLVFPAIAMASLFLY).

The protein belongs to the PsaI family.

Its subcellular location is the plastid. The protein resides in the chloroplast thylakoid membrane. May help in the organization of the PsaL subunit. This chain is Photosystem I reaction center subunit VIII, found in Oltmannsiellopsis viridis (Marine flagellate).